A 395-amino-acid chain; its full sequence is Putative 8-amino-7-oxononanoate synthase (395 aa).

R23 contacts substrate. 110–111 (GF) is a binding site for pyridoxal 5'-phosphate. Position 135 (H135) interacts with substrate. Pyridoxal 5'-phosphate is bound by residues S182, 207-210 (DEAH), and 239-242 (TFSK). K242 bears the N6-(pyridoxal phosphate)lysine mark. Substrate is bound at residue T356.

The protein belongs to the class-II pyridoxal-phosphate-dependent aminotransferase family. BioF subfamily. Homodimer. It depends on pyridoxal 5'-phosphate as a cofactor.

The enzyme catalyses 6-carboxyhexanoyl-[ACP] + L-alanine + H(+) = (8S)-8-amino-7-oxononanoate + holo-[ACP] + CO2. It participates in cofactor biosynthesis; biotin biosynthesis. In terms of biological role, catalyzes the decarboxylative condensation of pimeloyl-[acyl-carrier protein] and L-alanine to produce 8-amino-7-oxononanoate (AON), [acyl-carrier protein], and carbon dioxide. This Bacillus thuringiensis subsp. konkukian (strain 97-27) protein is Putative 8-amino-7-oxononanoate synthase (bioF).